Here is a 282-residue protein sequence, read N- to C-terminus: Probable metal transport system membrane protein TM_0125 (282 aa).

The next 9 membrane-spanning stretches (helical) occupy residues 33–53 (AFVG…IVVF), 58–78 (FIGD…TLIG), 79–99 (ADHR…VSLF), 109–129 (AIGI…SVSG), 148–168 (STDV…TVVF), 184–204 (FYGI…AITV), 210–230 (VVGV…SKIF), 234–254 (FWSL…AGFL), and 259–279 (LDLP…LPML).

Belongs to the ABC-3 integral membrane protein family.

Its subcellular location is the cell inner membrane. Its function is as follows. Part of an ATP-driven transport system TM_0123/TM_0124/TM_0125 for a metal. This is Probable metal transport system membrane protein TM_0125 from Thermotoga maritima (strain ATCC 43589 / DSM 3109 / JCM 10099 / NBRC 100826 / MSB8).